A 190-amino-acid polypeptide reads, in one-letter code: Lipid A acyltransferase PagP (190 aa).

The signal sequence occupies residues 1–18 (MKRLISCLTIICALNASA). Residues His60, Asp103, and Ser104 contribute to the active site.

The protein belongs to the lipid A palmitoyltransferase family. Homodimer.

It is found in the cell outer membrane. The enzyme catalyses a lipid A + a 1,2-diacyl-sn-glycero-3-phosphocholine = a hepta-acyl lipid A + a 2-acyl-sn-glycero-3-phosphocholine. The catalysed reaction is a lipid IVA + a 1,2-diacyl-sn-glycero-3-phosphocholine = a lipid IVB + a 2-acyl-sn-glycero-3-phosphocholine. It carries out the reaction a lipid IIA + a 1,2-diacyl-sn-glycero-3-phosphocholine = a lipid IIB + a 2-acyl-sn-glycero-3-phosphocholine. Transfers a fatty acid residue from the sn-1 position of a phospholipid to the N-linked hydroxyfatty acid chain on the proximal unit of lipid A or its precursors. This is Lipid A acyltransferase PagP from Legionella pneumophila (strain Corby).